The following is a 175-amino-acid chain: Ribosome maturation factor RimM (175 aa).

Residues 96-175 (EGDYYWHDLI…TIEVDWDAGF (80 aa)) form the PRC barrel domain.

This sequence belongs to the RimM family. As to quaternary structure, binds ribosomal protein uS19.

The protein resides in the cytoplasm. In terms of biological role, an accessory protein needed during the final step in the assembly of 30S ribosomal subunit, possibly for assembly of the head region. Essential for efficient processing of 16S rRNA. May be needed both before and after RbfA during the maturation of 16S rRNA. It has affinity for free ribosomal 30S subunits but not for 70S ribosomes. This Actinobacillus succinogenes (strain ATCC 55618 / DSM 22257 / CCUG 43843 / 130Z) protein is Ribosome maturation factor RimM.